Here is a 573-residue protein sequence, read N- to C-terminus: WRKY transcription factor SUSIBA2 (573 aa).

Disordered stretches follow at residues 56 to 133 and 157 to 192; these read AHPD…CSRE and PAEVGTSEPQQMNSSDNAMQEPQSENVADKSADDGY. The segment covering 64-85 has biased composition (basic and acidic residues); sequence PRDKSVRNAHEDRGSRDFEFKP. Over residues 108-122 the composition is skewed to low complexity; sequence MQNQSMNPSSSSSNM. Positions 163 to 182 are enriched in polar residues; sequence SEPQQMNSSDNAMQEPQSEN. Residues 183–192 are compositionally biased toward basic and acidic residues; sequence VADKSADDGY. The segment at residues 183–247 is a DNA-binding region (WRKY 1); it reads VADKSADDGY…YKGRHNHPKP (65 aa). Zn(2+) contacts are provided by C214, C219, H242, and H244. A disordered region spans residues 240 to 332; that stretch reads GRHNHPKPQP…EDLESKRRKM (93 aa). A compositionally biased stretch (basic and acidic residues) spans 263–277; the sequence is GEERYDGASAADDKS. The segment at residues 357–422 is a DNA-binding region (WRKY 2); that stretch reads SEVDILDDGY…YEGKHNHEVP (66 aa). C388, C393, H417, and H419 together coordinate Zn(2+).

Belongs to the WRKY group I family. Expressed in endosperm, but not in leaves.

It is found in the nucleus. Transcription factor involved in starch synthesis. Acts as a transcriptional activator in sugar signaling. Interacts specifically with the SURE and W-box elements, but not with the SP8a element. The protein is WRKY transcription factor SUSIBA2 of Hordeum vulgare (Barley).